The primary structure comprises 788 residues: Protein translocase subunit SecA 2 (788 aa).

Residues Q86, 104–108 (GEGKT), and D493 contribute to the ATP site.

Belongs to the SecA family. In terms of assembly, monomer and homodimer. Part of the essential Sec protein translocation apparatus which comprises SecA, SecYEG and auxiliary proteins SecDF. Other proteins may also be involved.

Its subcellular location is the cell membrane. The protein resides in the cytoplasm. It catalyses the reaction ATP + H2O + cellular proteinSide 1 = ADP + phosphate + cellular proteinSide 2.. Part of the Sec protein translocase complex. Interacts with the SecYEG preprotein conducting channel. Has a central role in coupling the hydrolysis of ATP to the transfer of proteins into and across the cell membrane, serving as an ATP-driven molecular motor driving the stepwise translocation of polypeptide chains across the membrane. The chain is Protein translocase subunit SecA 2 from Bacillus anthracis.